Reading from the N-terminus, the 329-residue chain is uncharacterized protein (329 aa).

One can recognise an SIS domain in the interval 38–184 (IVKLILKSQE…MACLMRAKNF (147 aa)). 56–61 (GVGKSA) lines the ATP pocket. CBS domains are found at residues 211–267 (QTTN…GLSL) and 276–329 (TLKP…GLKA).

It belongs to the SIS family. GutQ/KpsF subfamily.

This is an uncharacterized protein from Helicobacter pylori (strain J99 / ATCC 700824) (Campylobacter pylori J99).